A 140-amino-acid polypeptide reads, in one-letter code: uncharacterized protein (140 aa).

The tract at residues 34-88 (PLRWRNRARNREKPHSPRAVSSPATHSLPPSNPCRLTPTLSSARPREGSCPSKCS) is disordered.

Expressed in a range of cell lines, including B-cell lymphoma and prostate.

This is an uncharacterized protein from Homo sapiens (Human).